The primary structure comprises 86 residues: Small ribosomal subunit protein bS20 (86 aa).

The interval 1–26 (MANIKSAKKRALQSEKSRKHNASRRT) is disordered.

Belongs to the bacterial ribosomal protein bS20 family.

In terms of biological role, binds directly to 16S ribosomal RNA. The sequence is that of Small ribosomal subunit protein bS20 from Psychromonas ingrahamii (strain DSM 17664 / CCUG 51855 / 37).